The sequence spans 619 residues: TOX high mobility group box family member 4 (619 aa).

2 disordered regions span residues 155–227 (LSLG…QKPV) and 306–335 (DPVP…TESP). Thr176 carries the post-translational modification Phosphothreonine. 2 positions are modified to phosphoserine: Ser178 and Ser182. Basic and acidic residues predominate over residues 183–193 (LHEDGVDDFRR). Positions 208–218 (KQKAPKKRKKK) are enriched in basic residues. Residues 213–218 (KKRKKK) carry the Nuclear localization signal motif. A DNA-binding region (HMG box) is located at residues 223 to 291 (PQKPVSAYAL…EYLKALAAYK (69 aa)). Thr313 bears the Phosphothreonine mark. Phosphoserine is present on Ser315. A compositionally biased stretch (low complexity) spans 320–335 (TAADPASPAPASTESP). The residue at position 479 (Arg479) is an Asymmetric dimethylarginine. A phosphoserine mark is found at Ser531, Ser548, Ser550, Ser558, Ser560, and Ser565.

Component of the PNUTS-PP1 phosphatase complex, composed of PPP1R10/PNUTS, TOX4, WDR82 and PPP1CA or PPP1CB or PPP1CC. Interacts with PPP1R10/PNUTS. Interacts with FOXO1 and CREB1 (increased by cAMP); FOXO1 and CREB1 are required for full induction of TOX4-dependent activity and the interactions are inhibited by insulin.

It is found in the nucleus. It localises to the chromosome. With respect to regulation, in liver, recruited to target gene promoters following treatment with dexamethasone and cAMP. Binding is decreased in presence of insulin. In terms of biological role, transcription factor that modulates cell fate reprogramming from the somatic state to the pluripotent and neuronal fate. In liver, controls the expression of hormone-regulated gluconeogenic genes such as G6PC1 and PCK1. This regulation is independent of the insulin receptor activation. Also acts as a regulatory component of protein phosphatase 1 (PP1) complexes. Component of the PNUTS-PP1 protein phosphatase complex, a PP1 complex that regulates RNA polymerase II transcription pause-release. PNUTS-PP1 also plays a role in the control of chromatin structure and cell cycle progression during the transition from mitosis into interphase. This chain is TOX high mobility group box family member 4, found in Mus musculus (Mouse).